The chain runs to 246 residues: Protein DEHYDRATION-INDUCED 19 homolog 3 (246 aa).

Residues 185–230 (ERSKAPVPIPDDTSIHKDTPAQPWESRIDSSLTSEEREQKRKQATD) form a disordered region. Residues 218-229 (SEEREQKRKQAT) show a composition bias toward basic and acidic residues.

Belongs to the Di19 family.

In Oryza sativa subsp. japonica (Rice), this protein is Protein DEHYDRATION-INDUCED 19 homolog 3 (DI19-3).